Here is a 635-residue protein sequence, read N- to C-terminus: MAGUK p55 subfamily member 4 (635 aa).

Over residues 1–16 (MRQSDRGAELTNEDRA) the composition is skewed to basic and acidic residues. Residues 1–23 (MRQSDRGAELTNEDRALPTPPDP) are disordered. L27 domains follow at residues 23–79 (PENG…EKKL) and 86–136 (AQIL…FEPL). One can recognise a PDZ domain in the interval 153–234 (IVCLVKNQQP…TIMFKVIPVS (82 aa)). In terms of domain architecture, SH3 spans 241-311 (QKMVYVRAMI…PSNHLLKRKQ (71 aa)). The 190-residue stretch at 426–615 (HRLIVLVGPS…ACGQLLSAIQ (190 aa)) folds into the Guanylate kinase-like domain. Residues 567-622 (VDMKFKDEDLQEMEELAQKMESQFGQFFDHVIVNDNLQDACGQLLSAIQKAQEELQ) are a coiled coil.

It belongs to the MAGUK family. As to quaternary structure, may interact with GRIA2. Interacts with MPDZ. Forms a complex with CRB1 and PALS1. Interacts with FASLG. In terms of tissue distribution, detected in the retina (at protein level). Highly enriched in the retina where it is mainly expressed by rod photoreceptors; detected in the inner segment of the photoreceptor layer and in the outer nuclear layer. Also detected at much lower levels in pineal gland, cerebellum, cortex, hippocampus, olfactory bulb, heart, liver and spleen. Expressed in the CA1-CA3 regions of pyramidal cell layers and in the granule cell layer of dentate gyrus in the hippocampus. In the cerebellum, expressed in Purkinje cells and throughout the granule cell layer. In the olfactory bulb, expressed in mitral cells.

The protein localises to the cytoplasm. Functionally, may play a role in retinal photoreceptors development. This chain is MAGUK p55 subfamily member 4 (Mpp4), found in Mus musculus (Mouse).